A 174-amino-acid polypeptide reads, in one-letter code: F-box protein At1g70360 (174 aa).

An F-box domain is found at 136–174 (PPCFISLPRELKHKILESLPGVDIGTLACVSSELRDMAS).

This is F-box protein At1g70360 from Arabidopsis thaliana (Mouse-ear cress).